The chain runs to 894 residues: Probable ion channel SYM8 (894 aa).

The tract at residues 1-124 is disordered; sequence MAKSNEEPNS…PPSLPIAITK (124 aa). Composition is skewed to polar residues over residues 7–16, 24–33, and 44–63; these read EPNSNLNTNK, TLAQQPSLNL, and IGNSSSSSTKTDFEQQQRNY. 4 helical membrane passes run 134–154, 204–224, 267–287, and 319–339; these read SPIFYLFVITCVIFVPYSAFL, TISLYIVLFTLVLPFILYKYI, LALLFATLFLIAFGGLALYAV, and IVSVSISAGGMLIFAMMLGLV. RCK N-terminal domains lie at 360 to 501 and 620 to 769; these read RNHV…ETVV and PEKI…DKSI. The stretch at 390–415 forms a coiled coil; the sequence is VIVVLAEKEKEEMEMDIAKLEFDFMG.

This sequence belongs to the castor/pollux (TC 1.A.1.23) family. In terms of assembly, homotetramer.

It localises to the nucleus membrane. Functionally, required for both rhizobial and mycorrhizal symbiosis. Involved in Nod-factor-induced calcium spiking. May induce a change in membrane polarization that activates the opening of a calcium channel required for calcium spiking. Might be calcium gated. This chain is Probable ion channel SYM8 (SYM8), found in Pisum sativum (Garden pea).